The following is a 146-amino-acid chain: MPTPKKGARLGGSPSHQRKILSNLAAQLFEHGAIRTTDAKAKLLRPYAEKLITKAKSGTLADRRNVAKLIPNKEIISVLFDDIAPKVADRSGGYTRIIKLENRKGDNAPMSQISLVTEELASSEASRATRAAASKKAEEEAASEAE.

The segment covering 124-134 has biased composition (low complexity); sequence EASRATRAAAS. The disordered stretch occupies residues 124–146; it reads EASRATRAAASKKAEEEAASEAE.

Belongs to the bacterial ribosomal protein bL17 family. In terms of assembly, part of the 50S ribosomal subunit. Contacts protein L32.

The sequence is that of Large ribosomal subunit protein bL17 from Corynebacterium kroppenstedtii (strain DSM 44385 / JCM 11950 / CIP 105744 / CCUG 35717).